Reading from the N-terminus, the 278-residue chain is Large ribosomal subunit protein uL2 (278 aa).

Disordered stretches follow at residues 1–58 (MAIR…GGGH) and 224–278 (VVMN…GKKR). A compositionally biased stretch (basic and acidic residues) spans 23-33 (EITRDHPEKSL). The segment covering 37 to 58 (LHGRGGRNAHGRITTRHKGGGH) has biased composition (basic residues). The span at 253-268 (PEGRTRKPKKASDKLI) shows a compositional bias: basic and acidic residues. The segment covering 269–278 (VRRRRTGKKR) has biased composition (basic residues).

It belongs to the universal ribosomal protein uL2 family. As to quaternary structure, part of the 50S ribosomal subunit. Forms a bridge to the 30S subunit in the 70S ribosome.

Its function is as follows. One of the primary rRNA binding proteins. Required for association of the 30S and 50S subunits to form the 70S ribosome, for tRNA binding and peptide bond formation. It has been suggested to have peptidyltransferase activity; this is somewhat controversial. Makes several contacts with the 16S rRNA in the 70S ribosome. This is Large ribosomal subunit protein uL2 from Mycolicibacterium vanbaalenii (strain DSM 7251 / JCM 13017 / BCRC 16820 / KCTC 9966 / NRRL B-24157 / PYR-1) (Mycobacterium vanbaalenii).